The chain runs to 61 residues: Small ribosomal subunit protein uS14B (61 aa).

The Zn(2+) site is built by cysteine 24, cysteine 27, cysteine 40, and cysteine 43.

This sequence belongs to the universal ribosomal protein uS14 family. Zinc-binding uS14 subfamily. Part of the 30S ribosomal subunit. Contacts proteins S3 and S10. Requires Zn(2+) as cofactor.

In terms of biological role, binds 16S rRNA, required for the assembly of 30S particles and may also be responsible for determining the conformation of the 16S rRNA at the A site. The sequence is that of Small ribosomal subunit protein uS14B from Pediococcus pentosaceus (strain ATCC 25745 / CCUG 21536 / LMG 10740 / 183-1w).